A 308-amino-acid polypeptide reads, in one-letter code: Mitochondrial brown fat uncoupling protein 1 (308 aa).

Residues 1-10 (MVASAEADVP) are Mitochondrial intermembrane-facing. A helical membrane pass occupies residues 11–33 (PPTMLVKIASAGLSACLADIITF). Solcar repeat units lie at residues 11 to 103 (PPTM…VQEY), 112 to 202 (ATLG…LKEA), and 211 to 296 (DDIP…LKKE). The Mitochondrial matrix segment spans residues 34 to 74 (PLDTAKVRLQVQGERPNAPGVKYKGVLGTIATVAKTEGPLK). K57 is a fatty acid 16:0 binding site. Residues 75–97 (LYGGLPAGIQRQISFASLRIGLY) traverse the membrane as a helical segment. The Mitochondrial intermembrane segment spans residues 98–117 (DTVQEYFNAHRKTPATLGNK). The chain crosses the membrane as a helical span at residues 118–134 (ISAGLMTGCVTVFIGQP). The Mitochondrial matrix segment spans residues 135–179 (TEVAKVRMQAQSSLHWLKPRYSGTYNAYYVIVKTEGFLGLWKGTS). The helical transmembrane segment at 180 to 196 (LNLTRNVIINCTELVVY) threads the bilayer. Topologically, residues 197 to 213 (DVLKEALVKNNVLADDI) are mitochondrial intermembrane. A helical transmembrane segment spans residues 214 to 233 (PCHLLAALTAGFCTTALASP). Topologically, residues 234-267 (VDVVKTRFINSPPGYYPHVHNCALNMLQKEGLRA) are mitochondrial matrix. A Cysteine sulfenic acid (-SOH) modification is found at C255. Residues 268-290 (FFKGFVPSFLRLGSWTVIMHVTF) traverse the membrane as a helical segment. K270 serves as a coordination point for fatty acid 16:0. Topologically, residues 291–308 (EQLKKELMKSRQTVDCAT) are mitochondrial intermembrane.

It belongs to the mitochondrial carrier (TC 2.A.29) family. In terms of assembly, most probably functions as a monomer. Binds one purine nucleotide per monomer. However, has also been suggested to function as a homodimer or a homotetramer. Tightly associates with cardiolipin in the mitochondrion inner membrane; may stabilize and regulate its activity. May undergo sulfenylation upon cold exposure. May increase the sensitivity of UCP1 thermogenic function to the activation by noradrenaline probably through structural effects. Post-translationally, may undergo ubiquitin-mediated proteasomal degradation. In terms of tissue distribution, brown adipose tissue.

The protein resides in the mitochondrion inner membrane. The catalysed reaction is H(+)(in) = H(+)(out). Its activity is regulated as follows. Has no constitutive proton transporter activity and has to be activated by long-chain fatty acids/LCFAs. Inhibited by purine nucleotides. Both purine nucleotides and LCFAs bind the cytosolic side of the transporter and directly compete to activate or inhibit it. Activated by noradrenaline and reactive oxygen species. Despite lacking canonical translational encoding for selenocysteine, a small pool of the protein has been observed to selectively incorporate selenocysteine at 'Cys-255'. Selenocysteine-modified protein is highly sensitive to redox modification and may constitute a pool of protein highly sensitive to activation by elevated levels of reactive oxygen species (ROS). Mitochondrial protein responsible for thermogenic respiration, a specialized capacity of brown adipose tissue and beige fat that participates in non-shivering adaptive thermogenesis to temperature and diet variations and more generally to the regulation of energy balance. Functions as a long-chain fatty acid/LCFA and proton symporter, simultaneously transporting one LCFA and one proton through the inner mitochondrial membrane. However, LCFAs remaining associated with the transporter via their hydrophobic tails, it results in an apparent transport of protons activated by LCFAs. Thereby, dissipates the mitochondrial proton gradient and converts the energy of substrate oxydation into heat instead of ATP. Regulates the production of reactive oxygen species/ROS by mitochondria. In Suncus murinus (Asian house shrew), this protein is Mitochondrial brown fat uncoupling protein 1.